We begin with the raw amino-acid sequence, 507 residues long: Chromosomal replication initiator protein DnaA (507 aa).

Residues 1 to 112 (MTDDPGSGFT…PATDEADDTT (112 aa)) are domain I, interacts with DnaA modulators. Residues 99–162 (RIAPPATDEA…ERPRNTDSAT (64 aa)) are disordered. The span at 113–127 (VPPSENPATTSPDTT) shows a compositional bias: polar residues. The domain II stretch occupies residues 113–166 (VPPSENPATTSPDTTTDNDEIDDSAAARGDNQHSWPSYFTERPRNTDSATAGVT). The tract at residues 167–383 (SLNRRYTFDT…GALIRVTAFA (217 aa)) is domain III, AAA+ region. ATP contacts are provided by glycine 211, glycine 213, lysine 214, and threonine 215. Residues 384 to 507 (SLNKTPIDKA…TTRIRQRSKR (124 aa)) are domain IV, binds dsDNA.

The protein belongs to the DnaA family. As to quaternary structure, oligomerizes as a right-handed, spiral filament on DNA at oriC.

The protein resides in the cytoplasm. Its function is as follows. Plays an essential role in the initiation and regulation of chromosomal replication. ATP-DnaA binds to the origin of replication (oriC) to initiate formation of the DNA replication initiation complex once per cell cycle. Binds the DnaA box (a 9 base pair repeat at the origin) and separates the double-stranded (ds)DNA. Forms a right-handed helical filament on oriC DNA; dsDNA binds to the exterior of the filament while single-stranded (ss)DNA is stabiized in the filament's interior. The ATP-DnaA-oriC complex binds and stabilizes one strand of the AT-rich DNA unwinding element (DUE), permitting loading of DNA polymerase. After initiation quickly degrades to an ADP-DnaA complex that is not apt for DNA replication. Binds acidic phospholipids. This Mycobacterium bovis (strain BCG / Tokyo 172 / ATCC 35737 / TMC 1019) protein is Chromosomal replication initiator protein DnaA.